Reading from the N-terminus, the 158-residue chain is SsrA-binding protein (158 aa).

The interval 135–158 is disordered; that stretch reads DKRKTLKDRDWERDKQRGFKKDLD. Basic and acidic residues predominate over residues 141 to 158; the sequence is KDRDWERDKQRGFKKDLD.

It belongs to the SmpB family.

It is found in the cytoplasm. In terms of biological role, required for rescue of stalled ribosomes mediated by trans-translation. Binds to transfer-messenger RNA (tmRNA), required for stable association of tmRNA with ribosomes. tmRNA and SmpB together mimic tRNA shape, replacing the anticodon stem-loop with SmpB. tmRNA is encoded by the ssrA gene; the 2 termini fold to resemble tRNA(Ala) and it encodes a 'tag peptide', a short internal open reading frame. During trans-translation Ala-aminoacylated tmRNA acts like a tRNA, entering the A-site of stalled ribosomes, displacing the stalled mRNA. The ribosome then switches to translate the ORF on the tmRNA; the nascent peptide is terminated with the 'tag peptide' encoded by the tmRNA and targeted for degradation. The ribosome is freed to recommence translation, which seems to be the essential function of trans-translation. This is SsrA-binding protein from Psychrobacter cryohalolentis (strain ATCC BAA-1226 / DSM 17306 / VKM B-2378 / K5).